A 259-amino-acid polypeptide reads, in one-letter code: Global transcriptional regulator CodY (259 aa).

Residues 1 to 155 (MSLLSRMRKI…GATVVGMEIL (155 aa)) form a GAF domain region. The segment at residues 203 to 222 (ASKIADRVGITRSVIVNALR) is a DNA-binding region (H-T-H motif). Serine 215 bears the Phosphoserine mark.

It belongs to the CodY family.

The protein resides in the cytoplasm. Its function is as follows. DNA-binding global transcriptional regulator which is involved in the adaptive response to starvation and acts by directly or indirectly controlling the expression of numerous genes in response to nutrient availability. During rapid exponential growth, CodY is highly active and represses genes whose products allow adaptation to nutrient depletion. The protein is Global transcriptional regulator CodY of Halalkalibacterium halodurans (strain ATCC BAA-125 / DSM 18197 / FERM 7344 / JCM 9153 / C-125) (Bacillus halodurans).